The primary structure comprises 578 residues: Arginine--tRNA ligase (578 aa).

The short motif at 123–133 (PNLAKEMHVGH) is the 'HIGH' region element.

It belongs to the class-I aminoacyl-tRNA synthetase family. As to quaternary structure, monomer.

The protein localises to the cytoplasm. The enzyme catalyses tRNA(Arg) + L-arginine + ATP = L-arginyl-tRNA(Arg) + AMP + diphosphate. The polypeptide is Arginine--tRNA ligase (Hahella chejuensis (strain KCTC 2396)).